Consider the following 59-residue polypeptide: Small ribosomal subunit protein bS21 (59 aa).

Residues 34–59 (KHEHYEKPSVKRKKKSEAARRRKRSF) are disordered. A compositionally biased stretch (basic residues) spans 43 to 59 (VKRKKKSEAARRRKRSF).

This sequence belongs to the bacterial ribosomal protein bS21 family.

This chain is Small ribosomal subunit protein bS21, found in Desulforudis audaxviator (strain MP104C).